Here is a 496-residue protein sequence, read N- to C-terminus: UDP-N-acetylmuramoylalanine--D-glutamate ligase (496 aa).

130-136 (GTNGKTT) is a binding site for ATP.

It belongs to the MurCDEF family. Interacts with PknA. In terms of processing, phosphorylated by PknA.

It is found in the cytoplasm. The catalysed reaction is UDP-N-acetyl-alpha-D-muramoyl-L-alanine + D-glutamate + ATP = UDP-N-acetyl-alpha-D-muramoyl-L-alanyl-D-glutamate + ADP + phosphate + H(+). The protein operates within cell wall biogenesis; peptidoglycan biosynthesis. Its function is as follows. Cell wall formation. Catalyzes the addition of glutamate to the nucleotide precursor UDP-N-acetylmuramoyl-L-alanine (UMA). This chain is UDP-N-acetylmuramoylalanine--D-glutamate ligase, found in Mycobacterium tuberculosis (strain ATCC 25177 / H37Ra).